The primary structure comprises 1078 residues: Carbamoyl phosphate synthase large chain (1078 aa).

The carboxyphosphate synthetic domain stretch occupies residues 1–401; sequence MARQPLVSSV…ALQKAVRGLE (401 aa). ATP is bound by residues Arg-129, Arg-169, Gly-175, Gly-176, Arg-208, Leu-210, Glu-215, Gly-241, Val-242, His-243, Gln-284, and Glu-298. One can recognise an ATP-grasp 1 domain in the interval 133–327; that stretch reads KELLLEIGEP…IARIAAKLAI (195 aa). Mg(2+) contacts are provided by Gln-284, Glu-298, and Asn-300. Mn(2+) is bound by residues Gln-284, Glu-298, and Asn-300. Residues 402 to 546 form an oligomerization domain region; that stretch reads TDQTDLTWED…YATYEDENEA (145 aa). The segment at 547–935 is carbamoyl phosphate synthetic domain; sequence PPLDSPKAVV…ALAKAFLAAG (389 aa). The 191-residue stretch at 677–867 folds into the ATP-grasp 2 domain; that stretch reads ERFLHELGIP…MVDVATQILL (191 aa). Residues Arg-713, Lys-752, Leu-754, Glu-758, Gly-783, Val-784, His-785, Ser-786, Gln-826, and Glu-838 each coordinate ATP. Mg(2+) contacts are provided by Gln-826, Glu-838, and Asn-840. Mn(2+) contacts are provided by Gln-826, Glu-838, and Asn-840. Residues 936–1078 enclose the MGS-like domain; sequence LAIERGAPVL…AYRTREAVLA (143 aa). The segment at 936 to 1078 is allosteric domain; it reads LAIERGAPVL…AYRTREAVLA (143 aa).

It belongs to the CarB family. Composed of two chains; the small (or glutamine) chain promotes the hydrolysis of glutamine to ammonia, which is used by the large (or ammonia) chain to synthesize carbamoyl phosphate. Tetramer of heterodimers (alpha,beta)4. It depends on Mg(2+) as a cofactor. Requires Mn(2+) as cofactor.

The enzyme catalyses hydrogencarbonate + L-glutamine + 2 ATP + H2O = carbamoyl phosphate + L-glutamate + 2 ADP + phosphate + 2 H(+). It carries out the reaction hydrogencarbonate + NH4(+) + 2 ATP = carbamoyl phosphate + 2 ADP + phosphate + 2 H(+). It participates in amino-acid biosynthesis; L-arginine biosynthesis; carbamoyl phosphate from bicarbonate: step 1/1. Its pathway is pyrimidine metabolism; UMP biosynthesis via de novo pathway; (S)-dihydroorotate from bicarbonate: step 1/3. Functionally, large subunit of the glutamine-dependent carbamoyl phosphate synthetase (CPSase). CPSase catalyzes the formation of carbamoyl phosphate from the ammonia moiety of glutamine, carbonate, and phosphate donated by ATP, constituting the first step of 2 biosynthetic pathways, one leading to arginine and/or urea and the other to pyrimidine nucleotides. The large subunit (synthetase) binds the substrates ammonia (free or transferred from glutamine from the small subunit), hydrogencarbonate and ATP and carries out an ATP-coupled ligase reaction, activating hydrogencarbonate by forming carboxy phosphate which reacts with ammonia to form carbamoyl phosphate. In Thermomicrobium roseum (strain ATCC 27502 / DSM 5159 / P-2), this protein is Carbamoyl phosphate synthase large chain.